Reading from the N-terminus, the 305-residue chain is Mitochondrial citrate transporter D (305 aa).

Solcar repeat units follow at residues 10-101 (LPFG…WGAF), 111-197 (QTQS…VRAQ), and 211-298 (RNDL…VMDF). 6 helical membrane passes run 16–36 (FIAGAVAGVSEILVMYPLDVV), 78–98 (SAPILMEAPKRATKFAANDSW), 118–137 (LTGATAGATESFVVVPFELV), 176–196 (TLWRHILWNSGYFGCIFQVRA), 208–228 (QQTRNDLIAGTIGGTAGTILN), and 270–291 (LYKGFLPKVLRLGPGGGILLVV).

It belongs to the mitochondrial carrier (TC 2.A.29) family.

It localises to the mitochondrion inner membrane. The catalysed reaction is citrate(in) + H(+)(in) = citrate(out) + H(+)(out). In terms of biological role, mitochondrial transporter that mediates citrate export from mitochondria to cytoplasm. Both ctpA, ctpB, and ctpD play important roles in citric acid transport across the mitochondrial membrane and function in a redundant manner. This is Mitochondrial citrate transporter D from Aspergillus niger (strain ATCC 1015 / CBS 113.46 / FGSC A1144 / LSHB Ac4 / NCTC 3858a / NRRL 328 / USDA 3528.7).